We begin with the raw amino-acid sequence, 327 residues long: Ornithine carbamoyltransferase 2, anabolic (327 aa).

Carbamoyl phosphate is bound by residues R109 and 136–139 (HPTQ). Residues N168, D232, and 236-237 (SM) contribute to the L-ornithine site. Carbamoyl phosphate is bound by residues 273–274 (CL) and R313.

Belongs to the aspartate/ornithine carbamoyltransferase superfamily. OTCase family. As to quaternary structure, homotrimer.

The protein localises to the cytoplasm. It catalyses the reaction carbamoyl phosphate + L-ornithine = L-citrulline + phosphate + H(+). The protein operates within amino-acid biosynthesis; L-arginine biosynthesis; L-arginine from L-ornithine and carbamoyl phosphate: step 1/3. Functionally, plays an important role in the survival and pathogenicity of P.syringae. Phaseolotoxin is a virulence factor that inhibits the catalysis of the host OTCase. Phaseolotoxin-producing bacteria do not suffer autointoxication because they possess the anabolic OTCase ArgK which can function even in the presence of phaseolotoxin. Reversibly catalyzes the transfer of the carbamoyl group from carbamoyl phosphate (CP) to the N(epsilon) atom of ornithine (ORN) to produce L-citrulline, which is a substrate for argininosuccinate synthetase, the enzyme involved in the final step in arginine biosynthesis. In Pseudomonas savastanoi pv. phaseolicola (Pseudomonas syringae pv. phaseolicola), this protein is Ornithine carbamoyltransferase 2, anabolic.